A 115-amino-acid polypeptide reads, in one-letter code: Gonadotropin subunit beta-2 (115 aa).

Cystine bridges form between C6–C54, C20–C69, C23–C107, C31–C85, C35–C87, and C90–C97. N10 is a glycosylation site (N-linked (GlcNAc...) asparagine).

The protein belongs to the glycoprotein hormones subunit beta family. In terms of assembly, heterodimer of an alpha and a beta chain.

The protein localises to the secreted. Its function is as follows. Involved in gametogenesis and steroidogenesis. The chain is Gonadotropin subunit beta-2 (cgbb) from Thunnus obesus (Bigeye tuna).